A 122-amino-acid chain; its full sequence is Small ribosomal subunit protein bS6 (122 aa).

The protein belongs to the bacterial ribosomal protein bS6 family.

Its function is as follows. Binds together with bS18 to 16S ribosomal RNA. This Vibrio cholerae serotype O1 (strain ATCC 39541 / Classical Ogawa 395 / O395) protein is Small ribosomal subunit protein bS6.